The primary structure comprises 107 residues: Parvalbumin beta 2 (107 aa).

Position 1 is an N-acetylserine (Ser1). 2 EF-hand domains span residues 37–72 (XSPD…FSAS) and 89–107 (DADG…LVKQ). Ca(2+)-binding residues include Asp50, Asp52, Ser54, Phe56, Glu58, Glu61, Asp89, Asp91, Asp93, Met95, and Glu100.

Belongs to the parvalbumin family.

Its function is as follows. In muscle, parvalbumin is thought to be involved in relaxation after contraction. It binds two calcium ions. The chain is Parvalbumin beta 2 from Oncorhynchus mykiss (Rainbow trout).